The chain runs to 324 residues: tRNA pseudouridine synthase B (324 aa).

D49 (nucleophile) is an active-site residue.

This sequence belongs to the pseudouridine synthase TruB family. Type 1 subfamily.

The catalysed reaction is uridine(55) in tRNA = pseudouridine(55) in tRNA. Functionally, responsible for synthesis of pseudouridine from uracil-55 in the psi GC loop of transfer RNAs. This chain is tRNA pseudouridine synthase B, found in Brucella anthropi (strain ATCC 49188 / DSM 6882 / CCUG 24695 / JCM 21032 / LMG 3331 / NBRC 15819 / NCTC 12168 / Alc 37) (Ochrobactrum anthropi).